A 250-amino-acid polypeptide reads, in one-letter code: tRNA (guanine-N(1)-)-methyltransferase (250 aa).

S-adenosyl-L-methionine-binding positions include G115 and 135–140 (LGDFVL).

The protein belongs to the RNA methyltransferase TrmD family. Homodimer.

The protein localises to the cytoplasm. It carries out the reaction guanosine(37) in tRNA + S-adenosyl-L-methionine = N(1)-methylguanosine(37) in tRNA + S-adenosyl-L-homocysteine + H(+). Functionally, specifically methylates guanosine-37 in various tRNAs. This chain is tRNA (guanine-N(1)-)-methyltransferase, found in Legionella pneumophila subsp. pneumophila (strain Philadelphia 1 / ATCC 33152 / DSM 7513).